The primary structure comprises 529 residues: Bifunctional purine biosynthesis protein PurH (529 aa).

Residues 1-148 (MQQHRPVRRA…KNHKDVAIVV (148 aa)) form the MGS-like domain.

Belongs to the PurH family.

It carries out the reaction (6R)-10-formyltetrahydrofolate + 5-amino-1-(5-phospho-beta-D-ribosyl)imidazole-4-carboxamide = 5-formamido-1-(5-phospho-D-ribosyl)imidazole-4-carboxamide + (6S)-5,6,7,8-tetrahydrofolate. The enzyme catalyses IMP + H2O = 5-formamido-1-(5-phospho-D-ribosyl)imidazole-4-carboxamide. The protein operates within purine metabolism; IMP biosynthesis via de novo pathway; 5-formamido-1-(5-phospho-D-ribosyl)imidazole-4-carboxamide from 5-amino-1-(5-phospho-D-ribosyl)imidazole-4-carboxamide (10-formyl THF route): step 1/1. It functions in the pathway purine metabolism; IMP biosynthesis via de novo pathway; IMP from 5-formamido-1-(5-phospho-D-ribosyl)imidazole-4-carboxamide: step 1/1. In Erwinia tasmaniensis (strain DSM 17950 / CFBP 7177 / CIP 109463 / NCPPB 4357 / Et1/99), this protein is Bifunctional purine biosynthesis protein PurH.